Reading from the N-terminus, the 331-residue chain is Adenosine deaminase (331 aa).

Zn(2+) contacts are provided by H12 and H14. H14, D16, and G170 together coordinate substrate. A Zn(2+)-binding site is contributed by H197. E200 (proton donor) is an active-site residue. D278 is a binding site for Zn(2+). D279 contacts substrate.

Belongs to the metallo-dependent hydrolases superfamily. Adenosine and AMP deaminases family. Adenosine deaminase subfamily. Zn(2+) is required as a cofactor.

It catalyses the reaction adenosine + H2O + H(+) = inosine + NH4(+). The enzyme catalyses 2'-deoxyadenosine + H2O + H(+) = 2'-deoxyinosine + NH4(+). Its function is as follows. Catalyzes the hydrolytic deamination of adenosine and 2-deoxyadenosine. The chain is Adenosine deaminase from Shewanella sp. (strain MR-7).